The sequence spans 88 residues: Small ribosomal subunit protein bS18B (88 aa).

The protein belongs to the bacterial ribosomal protein bS18 family. In terms of assembly, part of the 30S ribosomal subunit. Forms a tight heterodimer with protein bS6.

In terms of biological role, binds as a heterodimer with protein bS6 to the central domain of the 16S rRNA, where it helps stabilize the platform of the 30S subunit. This is Small ribosomal subunit protein bS18B from Roseiflexus castenholzii (strain DSM 13941 / HLO8).